The chain runs to 91 residues: UPF0358 protein SAB0977 (91 aa).

This sequence belongs to the UPF0358 family.

This Staphylococcus aureus (strain bovine RF122 / ET3-1) protein is UPF0358 protein SAB0977.